The primary structure comprises 193 residues: Oocyte-secreted protein 3 (193 aa).

Residues 1–22 (MKDFVRLQSSFLLCTILTLSEQ) form the signal peptide. Residues Asn64, Asn130, Asn148, Asn151, Asn165, and Asn178 are each glycosylated (N-linked (GlcNAc...) asparagine).

Belongs to the PLAC1 family.

Its subcellular location is the secreted. The sequence is that of Oocyte-secreted protein 3 from Homo sapiens (Human).